The chain runs to 938 residues: Mediator of RNA polymerase II transcription subunit 16 (938 aa).

This sequence belongs to the Mediator complex subunit 16 family. As to quaternary structure, component of the Mediator complex.

The protein localises to the nucleus. Its function is as follows. Component of the Mediator complex, a coactivator involved in the regulated transcription of nearly all RNA polymerase II-dependent genes. Mediator functions as a bridge to convey information from gene-specific regulatory proteins to the basal RNA polymerase II transcription machinery. Mediator is recruited to promoters by direct interactions with regulatory proteins and serves as a scaffold for the assembly of a functional preinitiation complex with RNA polymerase II and the general transcription factors. The sequence is that of Mediator of RNA polymerase II transcription subunit 16 (SIN4) from Eremothecium gossypii (strain ATCC 10895 / CBS 109.51 / FGSC 9923 / NRRL Y-1056) (Yeast).